A 426-amino-acid chain; its full sequence is MSKSENLYSAARELIPGGVNSPVRAFTGVGGTPLFIEKADGAYLYDVDGKAYIDYVGSWGPMVLGHNHPAIRNAVIEAAERGLSFGAPTEMEVKMAQLVTELVPTMDMVRMVNSGTEATMSAIRLARGFTGRDKIIKFEGCYHGHADCLLVKAGSGALTLGQPNSPGVPADFAKHTLTCTYNDLASVRAAFEQYPQEIACIIVEPVAGNMNCVPPLPEFLPGLRALCDEFGALLIIDEVMTGFRVALAGAQDYYGVVPDLTCLGKIIGGGMPVGAFGGRRDVMDALAPTGPVYQAGTLSGNPIAMAAGFACLNEVAQPGVHETLDELTTRLAEGLLEAAEEAGIPLVVNHVGGMFGIFFTDAESVTCYQDVMACDVERFKRFFHMMLDEGVYLAPSAFEAGFMSVAHSMEDINNTIDAARRVFAKL.

K265 carries the post-translational modification N6-(pyridoxal phosphate)lysine.

The protein belongs to the class-III pyridoxal-phosphate-dependent aminotransferase family. HemL subfamily. In terms of assembly, homodimer. It depends on pyridoxal 5'-phosphate as a cofactor.

It localises to the cytoplasm. It carries out the reaction (S)-4-amino-5-oxopentanoate = 5-aminolevulinate. It participates in porphyrin-containing compound metabolism; protoporphyrin-IX biosynthesis; 5-aminolevulinate from L-glutamyl-tRNA(Glu): step 2/2. In Escherichia coli (strain SMS-3-5 / SECEC), this protein is Glutamate-1-semialdehyde 2,1-aminomutase.